Here is a 379-residue protein sequence, read N- to C-terminus: Dual-specificity RNA methyltransferase RlmN (379 aa).

E90 (proton acceptor) is an active-site residue. Residues 96 to 348 form the Radical SAM core domain; that stretch reads EPSRGTLCVS…TTVRKTRGDD (253 aa). Residues C103 and C353 are joined by a disulfide bond. [4Fe-4S] cluster is bound by residues C110, C114, and C117. S-adenosyl-L-methionine contacts are provided by residues 179–180, S211, 233–235, and N310; these read GE and SLH. The S-methylcysteine intermediate role is filled by C353.

Belongs to the radical SAM superfamily. RlmN family. It depends on [4Fe-4S] cluster as a cofactor.

The protein resides in the cytoplasm. It catalyses the reaction adenosine(2503) in 23S rRNA + 2 reduced [2Fe-2S]-[ferredoxin] + 2 S-adenosyl-L-methionine = 2-methyladenosine(2503) in 23S rRNA + 5'-deoxyadenosine + L-methionine + 2 oxidized [2Fe-2S]-[ferredoxin] + S-adenosyl-L-homocysteine. The catalysed reaction is adenosine(37) in tRNA + 2 reduced [2Fe-2S]-[ferredoxin] + 2 S-adenosyl-L-methionine = 2-methyladenosine(37) in tRNA + 5'-deoxyadenosine + L-methionine + 2 oxidized [2Fe-2S]-[ferredoxin] + S-adenosyl-L-homocysteine. Functionally, specifically methylates position 2 of adenine 2503 in 23S rRNA and position 2 of adenine 37 in tRNAs. m2A2503 modification seems to play a crucial role in the proofreading step occurring at the peptidyl transferase center and thus would serve to optimize ribosomal fidelity. This is Dual-specificity RNA methyltransferase RlmN from Nitrosomonas europaea (strain ATCC 19718 / CIP 103999 / KCTC 2705 / NBRC 14298).